We begin with the raw amino-acid sequence, 936 residues long: DNA topoisomerase 1 (936 aa).

Residues 15 to 139 enclose the Toprim domain; it reads RRLVIVESPT…VKRMVFHEIT (125 aa). Residues Glu-21 and Asp-108 each contribute to the Mg(2+) site. The 458-residue stretch at 154-611 folds into the Topo IA-type catalytic domain; that stretch reads DIALVDAQET…FYFGGEHGVE (458 aa). Positions 188–193 are interaction with DNA; it reads SAGRVQ. Tyr-339 serves as the catalytic O-(5'-phospho-DNA)-tyrosine intermediate. 4 disordered regions span residues 661 to 688, 732 to 767, 841 to 884, and 903 to 936; these read LERM…LTPD, VLPE…SLFR, KRRG…ETNA, and LLAD…AKKA. Residues 910–936 are compositionally biased toward basic residues; the sequence is RGPVKKKAPAKKAAKKAPAKKAAAKKA.

This sequence belongs to the type IA topoisomerase family. As to quaternary structure, monomer. Mg(2+) is required as a cofactor.

It carries out the reaction ATP-independent breakage of single-stranded DNA, followed by passage and rejoining.. Releases the supercoiling and torsional tension of DNA, which is introduced during the DNA replication and transcription, by transiently cleaving and rejoining one strand of the DNA duplex. Introduces a single-strand break via transesterification at a target site in duplex DNA. The scissile phosphodiester is attacked by the catalytic tyrosine of the enzyme, resulting in the formation of a DNA-(5'-phosphotyrosyl)-enzyme intermediate and the expulsion of a 3'-OH DNA strand. The free DNA strand then undergoes passage around the unbroken strand, thus removing DNA supercoils. Finally, in the religation step, the DNA 3'-OH attacks the covalent intermediate to expel the active-site tyrosine and restore the DNA phosphodiester backbone. In terms of biological role, relaxes negatively (but not positively) supercoiled DNA, concatanates and knots circular ssDNA at 52 but not 37 degrees Celsius. Preferentially nicks supercoiled DNA at C(G/T)CTT, cutting between the TT residues, binds ss and dsDNA with the recognition site. This is DNA topoisomerase 1 from Mycolicibacterium smegmatis (strain ATCC 700084 / mc(2)155) (Mycobacterium smegmatis).